A 245-amino-acid polypeptide reads, in one-letter code: 6-carboxyhexanoate--CoA ligase (245 aa).

It belongs to the BioW family. Homodimer. The cofactor is Mg(2+).

It catalyses the reaction heptanedioate + ATP + CoA = 6-carboxyhexanoyl-CoA + AMP + diphosphate. The protein operates within metabolic intermediate metabolism; pimeloyl-CoA biosynthesis; pimeloyl-CoA from pimelate: step 1/1. In terms of biological role, catalyzes the transformation of pimelate into pimeloyl-CoA with concomitant hydrolysis of ATP to AMP. The chain is 6-carboxyhexanoate--CoA ligase from Sulfurihydrogenibium azorense (strain DSM 15241 / OCM 825 / Az-Fu1).